We begin with the raw amino-acid sequence, 660 residues long: DNA mismatch repair protein MutL (660 aa).

The protein belongs to the DNA mismatch repair MutL/HexB family.

Functionally, this protein is involved in the repair of mismatches in DNA. It is required for dam-dependent methyl-directed DNA mismatch repair. May act as a 'molecular matchmaker', a protein that promotes the formation of a stable complex between two or more DNA-binding proteins in an ATP-dependent manner without itself being part of a final effector complex. This is DNA mismatch repair protein MutL from Solibacter usitatus (strain Ellin6076).